The following is a 236-amino-acid chain: Small ribosomal subunit protein uS2c (236 aa).

Belongs to the universal ribosomal protein uS2 family.

It is found in the plastid. The protein resides in the chloroplast. The chain is Small ribosomal subunit protein uS2c (rps2) from Draba nemorosa (Woodland whitlowgrass).